The primary structure comprises 257 residues: Pimeloyl-[acyl-carrier protein] methyl ester esterase (257 aa).

The region spanning 15 to 241 (HLVLLHGWGL…KAAHAPFVSH (227 aa)) is the AB hydrolase-1 domain. Substrate-binding positions include W22, 82-83 (SL), and 143-147 (FLALQ). S82 functions as the Nucleophile in the catalytic mechanism. Active-site residues include D207 and H235. H235 provides a ligand contact to substrate.

The protein belongs to the AB hydrolase superfamily. Carboxylesterase BioH family. Monomer.

The protein resides in the cytoplasm. It carries out the reaction 6-carboxyhexanoyl-[ACP] methyl ester + H2O = 6-carboxyhexanoyl-[ACP] + methanol + H(+). It functions in the pathway cofactor biosynthesis; biotin biosynthesis. Its function is as follows. The physiological role of BioH is to remove the methyl group introduced by BioC when the pimeloyl moiety is complete. It allows to synthesize pimeloyl-ACP via the fatty acid synthetic pathway through the hydrolysis of the ester bonds of pimeloyl-ACP esters. The polypeptide is Pimeloyl-[acyl-carrier protein] methyl ester esterase (Klebsiella pneumoniae subsp. pneumoniae (strain ATCC 700721 / MGH 78578)).